Consider the following 759-residue polypeptide: Protein transport protein sec23-1 (759 aa).

C56, C60, C79, and C82 together coordinate Zn(2+).

This sequence belongs to the SEC23/SEC24 family. SEC23 subfamily. In terms of assembly, the COPII coat is composed of at least 5 proteins: the sec23/24 complex, the sec13/31 complex, and the protein sar1.

The protein localises to the cytoplasm. Its subcellular location is the cytoplasmic vesicle. It localises to the COPII-coated vesicle membrane. The protein resides in the endoplasmic reticulum membrane. It is found in the golgi apparatus membrane. Its function is as follows. Component of the coat protein complex II (COPII) which promotes the formation of transport vesicles from the endoplasmic reticulum (ER). The coat has two main functions, the physical deformation of the endoplasmic reticulum membrane into vesicles and the selection of cargo molecules. This chain is Protein transport protein sec23-1 (sec231), found in Schizosaccharomyces pombe (strain 972 / ATCC 24843) (Fission yeast).